Reading from the N-terminus, the 125-residue chain is Ribosome-binding factor A (125 aa).

The protein belongs to the RbfA family. In terms of assembly, monomer. Binds 30S ribosomal subunits, but not 50S ribosomal subunits or 70S ribosomes.

The protein localises to the cytoplasm. In terms of biological role, one of several proteins that assist in the late maturation steps of the functional core of the 30S ribosomal subunit. Associates with free 30S ribosomal subunits (but not with 30S subunits that are part of 70S ribosomes or polysomes). Required for efficient processing of 16S rRNA. May interact with the 5'-terminal helix region of 16S rRNA. In Fervidobacterium nodosum (strain ATCC 35602 / DSM 5306 / Rt17-B1), this protein is Ribosome-binding factor A.